The sequence spans 185 residues: Ribosome-recycling factor (185 aa).

The protein belongs to the RRF family.

The protein resides in the cytoplasm. In terms of biological role, responsible for the release of ribosomes from messenger RNA at the termination of protein biosynthesis. May increase the efficiency of translation by recycling ribosomes from one round of translation to another. This is Ribosome-recycling factor from Dehalococcoides mccartyi (strain ATCC BAA-2266 / KCTC 15142 / 195) (Dehalococcoides ethenogenes (strain 195)).